The chain runs to 302 residues: tRNA pseudouridine synthase B (302 aa).

Residue D45 is the Nucleophile of the active site.

Belongs to the pseudouridine synthase TruB family. Type 1 subfamily.

The enzyme catalyses uridine(55) in tRNA = pseudouridine(55) in tRNA. Functionally, responsible for synthesis of pseudouridine from uracil-55 in the psi GC loop of transfer RNAs. The chain is tRNA pseudouridine synthase B from Francisella tularensis subsp. tularensis (strain FSC 198).